The following is a 623-amino-acid chain: Cell pattern formation-associated protein stuA (623 aa).

A compositionally biased stretch (polar residues) spans 13 to 31 (QHMQSAGQPQQPQTVTSGP). Residues 13-111 (QHMQSAGQPQ…DTTGQHPPPG (99 aa)) form a disordered region. The HTH APSES-type domain maps to 115–221 (RVTATLWEDE…HNIGALLYHP (107 aa)). Positions 149–170 (GTKLLNVAGMTRGRRDGILKSE) form a DNA-binding region, H-T-H motif. Disordered regions lie at residues 232 to 270 (AAAE…PQSS) and 332 to 623 (ARSM…PRQR). Over residues 335–374 (MPTTPATTPPGSMQPYGSAQSFDGSRQQMYNAPSQQSPYP) the composition is skewed to polar residues. The span at 396–408 (GPPSSRPSGSAPS) shows a compositional bias: low complexity. The segment covering 423 to 446 (EHGHQSHAGEEDGEHEQHDAEYTH) has biased composition (basic and acidic residues). Residues 542 to 553 (APPADMANPMPN) show a composition bias toward low complexity. The nuclear localization domain stretch occupies residues 569–594 (KRGREGDDDLSRPVGDVPGMDMKRRK). The span at 570–579 (RGREGDDDLS) shows a compositional bias: basic and acidic residues.

It belongs to the EFG1/PHD1/stuA family.

Its subcellular location is the nucleus. Functionally, transcription factor that regulates asexual reproduction. Binds the StuA-response elements (StRE) with the consensus sequence 5'-(A/T)CGCG(T/A)N(A/C)-3' at the promoters of target genes. Controls conidiation by positively regulating the expression of brlA and abaA. Positively regulates the cephalosporin biosynthesis gene cluster. Also involved hyphal fragmentation and cell wall integrity. This is Cell pattern formation-associated protein stuA from Hapsidospora chrysogenum (strain ATCC 11550 / CBS 779.69 / DSM 880 / IAM 14645 / JCM 23072 / IMI 49137) (Acremonium chrysogenum).